The sequence spans 281 residues: Protoheme IX farnesyltransferase (281 aa).

9 helical membrane-spanning segments follow: residues 16 to 36 (TFLLMITFLVSYIVARGGADF), 38 to 58 (FVIAAISMFLAISGTTAINMW), 75 to 95 (VPAGILKPSECAAFGAAIFAI), 101 to 121 (FLVSLEFGLVVFFGLFFDIVV), 129 to 149 (KSPYSIVLGGFAGAMPALGGW), 150 to 170 (VAVQGFTLPGFIIAAIVLLWI), 202 to 224 (ASWAIVFATAAMLVLAASLYVLL), 228 to 250 (IFYLVISTSAVAFFLYKAVKFAL), and 261 to 281 (YKLASMTLGLVYFSLLLGVFL).

Belongs to the UbiA prenyltransferase family. Protoheme IX farnesyltransferase subfamily.

It is found in the cell membrane. The catalysed reaction is heme b + (2E,6E)-farnesyl diphosphate + H2O = Fe(II)-heme o + diphosphate. It functions in the pathway porphyrin-containing compound metabolism; heme O biosynthesis; heme O from protoheme: step 1/1. Converts heme B (protoheme IX) to heme O by substitution of the vinyl group on carbon 2 of heme B porphyrin ring with a hydroxyethyl farnesyl side group. The chain is Protoheme IX farnesyltransferase from Archaeoglobus fulgidus (strain ATCC 49558 / DSM 4304 / JCM 9628 / NBRC 100126 / VC-16).